A 1462-amino-acid polypeptide reads, in one-letter code: NK-tumor recognition protein (1462 aa).

The PPIase cyclophilin-type domain maps to 10–175 (HFDIEINREP…ADVRVIDCGV (166 aa)). Disordered stretches follow at residues 187–591 (KKRK…TMAQ) and 607–627 (VIPLSDSPPPSRWKPGQKPWK). The span at 198–213 (SDSSSNSSSSSESSSE) shows a compositional bias: low complexity. Residues 221–240 (SRRRKHKRRPKVKRSKKRRK) show a composition bias toward basic residues. Basic and acidic residues-rich tracts occupy residues 241–250 (EASSSEEPRN) and 258–286 (GHSERSDTNEKRSVDSSAKREKPVVRPEE). A Glycyl lysine isopeptide (Lys-Gly) (interchain with G-Cter in SUMO2) cross-link involves residue Lys-323. A compositionally biased stretch (basic residues) spans 329–345 (SGRKIKGRGTIRYHTPP). A phosphoserine mark is found at Ser-379, Ser-401, and Ser-416. Over residues 382-402 (KWSKGDKLSDPCSSRWDERSL) the composition is skewed to basic and acidic residues. A compositionally biased stretch (polar residues) spans 403 to 421 (SQRSRSWSYNGYYSDLSTA). Basic residues predominate over residues 423 to 459 (HSGHHKKRRKEKKVKHKKKGKKQKHCRRHKQTKKRRI). Phosphoserine occurs at positions 463 and 471. The span at 497-507 (KRDWSKSDKDV) shows a compositional bias: basic and acidic residues. The span at 524-542 (HSQSYSRGSSRSRTASKSS) shows a compositional bias: low complexity. The segment covering 543 to 568 (SHSRSRSKSRSSSKSGHRKRASKSPR) has biased composition (basic residues). Residues Lys-578 and Lys-581 each participate in a glycyl lysine isopeptide (Lys-Gly) (interchain with G-Cter in SUMO2) cross-link. Phosphoserine is present on Ser-613. Lys-639 is covalently cross-linked (Glycyl lysine isopeptide (Lys-Gly) (interchain with G-Cter in SUMO2)). Phosphoserine is present on Ser-648. Residues Lys-656 and Lys-666 each participate in a glycyl lysine isopeptide (Lys-Gly) (interchain with G-Cter in SUMO2) cross-link. The disordered stretch occupies residues 658–1072 (TGSSSSYHKR…EEDLSGKHDT (415 aa)). Low complexity-rich tracts occupy residues 699 to 725 (SRSYSRSYTRSRSLASSHSRSRSPSSR) and 736 to 749 (SQCSRSSSYTSISS). A compositionally biased stretch (basic residues) spans 754–774 (RAKRRLRSSGKKNSVSHKKHS). Residues 775–800 (SSSEKTLHSKYVKGRDRSSCVRKYSE) are compositionally biased toward basic and acidic residues. Residues 801 to 815 (SRSSLDYSSDSEQSS) are compositionally biased toward low complexity. Composition is skewed to basic and acidic residues over residues 823–870 (QEKE…DHLR) and 885–909 (WDSESNSERDVTKNSKNDSHPSSDK). Ser-866, Ser-887, Ser-889, Ser-891, and Ser-907 each carry phosphoserine. A compositionally biased stretch (acidic residues) spans 910–922 (EEGEATSDSESEV). The span at 932–969 (TTKSSTNTSLPDDNGAWKSSKQRTSTSDSEGSCSNSEN) shows a compositional bias: polar residues. Positions 988 to 1013 (EHTKKVKEKLKGKKDKKHKAPKRKQA) are enriched in basic residues. Residues 1022–1031 (FGEEEEEEID) are compositionally biased toward acidic residues. The segment covering 1032–1072 (DKQVTQESKEKKVSENNETIKDNILKTEKSSEEDLSGKHDT) has biased composition (basic and acidic residues). Residue Lys-1057 forms a Glycyl lysine isopeptide (Lys-Gly) (interchain with G-Cter in SUMO2) linkage. Phosphoserine occurs at positions 1077 and 1146. The segment at 1129-1156 (MEICTPDRSSPAKVEETSPLGNARLDTP) is disordered. Thr-1155 carries the phosphothreonine modification. Lys-1163 participates in a covalent cross-link: Glycyl lysine isopeptide (Lys-Gly) (interchain with G-Cter in SUMO2). The interval 1169–1215 (EHPQAEVVKQESSMSESKVLGEVGKQDSSSASLASAGESTGKKEVAE) is disordered. Lys-1177 is covalently cross-linked (Glycyl lysine isopeptide (Lys-Gly) (interchain with G-Cter in SUMO1); alternate). Lys-1177 participates in a covalent cross-link: Glycyl lysine isopeptide (Lys-Gly) (interchain with G-Cter in SUMO2); alternate. Ser-1203 is subject to Phosphoserine. Residues Lys-1216, Lys-1225, and Lys-1258 each participate in a glycyl lysine isopeptide (Lys-Gly) (interchain with G-Cter in SUMO2) cross-link. A disordered region spans residues 1251 to 1462 (LTTVPEMKPQ…RSPSESSRYS (212 aa)). Positions 1311-1348 (SRSPSRSRSKSETKSRHRTRSVSYSHSRSRSRSSTSSY) are arg/Ser tandem repeat-rich. Low complexity-rich tracts occupy residues 1331 to 1351 (SVSYSHSRSRSRSSTSSYRSR) and 1359 to 1376 (RGWYSRGRTRSRSSSYRS). The span at 1377–1388 (YKSHRTSSRSRS) shows a compositional bias: basic residues. A compositionally biased stretch (low complexity) spans 1389–1410 (RSSSYDPHSRSRSYTYDSYYSR). The span at 1425–1435 (RGRSYNRRSRS) shows a compositional bias: basic residues.

The protein localises to the cell membrane. It carries out the reaction [protein]-peptidylproline (omega=180) = [protein]-peptidylproline (omega=0). Its activity is regulated as follows. Inhibited by cyclosporin A (CsA). PPIase that catalyzes the cis-trans isomerization of proline imidic peptide bonds in oligopeptides and may therefore assist protein folding. Component of a putative tumor-recognition complex involved in the function of NK cells. In Homo sapiens (Human), this protein is NK-tumor recognition protein.